Reading from the N-terminus, the 725-residue chain is Homeobox protein unc-62 (725 aa).

An MEIS N-terminal domain is found at 133-218 (SSDVCSSASF…PLDIVGDERA (86 aa)). Disordered regions lie at residues 214–258 (GDER…PYEP), 295–317 (SSSS…LHST), 329–359 (VSSP…GNSM), 386–419 (SLHQ…PPPQ), 491–555 (VKME…KRKV), and 615–661 (IDQN…PDPT). A compositionally biased stretch (low complexity) spans 219 to 239 (SSSQPPMSPGSMGHHGHSGSP). Over residues 388 to 400 (HQHHLHHPHHFPH) the composition is skewed to basic residues. Residues 498–508 (SVSSSKSGGKK) are compositionally biased toward low complexity. Residues 541-550 (LSDSANGSQN) are compositionally biased toward polar residues. Positions 552–614 (KRKVPKVFSK…NARRRIVQPM (63 aa)) form a DNA-binding region, homeobox; TALE-type.

This sequence belongs to the TALE/MEIS homeobox family.

It is found in the nucleus. Its function is as follows. Acts redundantly with ceh-20 and ceh-40 to perform overlapping roles during embryogenesis. Required for postembryonic development of the ectoderm, including the Q, V and P cell lineages, playing a crucial role in ensuring that these cells and their descendants undergo their invariant patterns of cell division, migration, fusion and morphogenesis. Has a role in the mig-13 pathway to promote anterior migration of neuroblasts in the Q lineage. Required for multiple roles in regulating vulva development. The chain is Homeobox protein unc-62 (unc-62) from Caenorhabditis briggsae.